A 166-amino-acid chain; its full sequence is ATP synthase subunit b (166 aa).

The chain crosses the membrane as a helical span at residues 7 to 27 (QFSLGLFILQIILFVGLILLL).

Belongs to the ATPase B chain family. In terms of assembly, F-type ATPases have 2 components, F(1) - the catalytic core - and F(0) - the membrane proton channel. F(1) has five subunits: alpha(3), beta(3), gamma(1), delta(1), epsilon(1). F(0) has three main subunits: a(1), b(2) and c(10-14). The alpha and beta chains form an alternating ring which encloses part of the gamma chain. F(1) is attached to F(0) by a central stalk formed by the gamma and epsilon chains, while a peripheral stalk is formed by the delta and b chains.

Its subcellular location is the cell inner membrane. Functionally, f(1)F(0) ATP synthase produces ATP from ADP in the presence of a proton or sodium gradient. F-type ATPases consist of two structural domains, F(1) containing the extramembraneous catalytic core and F(0) containing the membrane proton channel, linked together by a central stalk and a peripheral stalk. During catalysis, ATP synthesis in the catalytic domain of F(1) is coupled via a rotary mechanism of the central stalk subunits to proton translocation. In terms of biological role, component of the F(0) channel, it forms part of the peripheral stalk, linking F(1) to F(0). The polypeptide is ATP synthase subunit b (Flavobacterium psychrophilum (strain ATCC 49511 / DSM 21280 / CIP 103535 / JIP02/86)).